The sequence spans 545 residues: CTP synthase (545 aa).

The segment at 1–265 is amidoligase domain; that stretch reads MSKYIFVTGG…DDLVVQNLGL (265 aa). S13 serves as a coordination point for CTP. Residue S13 coordinates UTP. ATP contacts are provided by residues 14–19 and D71; that span reads SLGKGA. Mg(2+) is bound by residues D71 and E139. CTP contacts are provided by residues 146-148, 186-191, and K222; these read DIE and KTKPTQ. UTP is bound by residues 186–191 and K222; that span reads KTKPTQ. In terms of domain architecture, Glutamine amidotransferase type-1 spans 290 to 541; sequence VIALVGKYVG…MRAAIAQRER (252 aa). G351 serves as a coordination point for L-glutamine. C378 functions as the Nucleophile; for glutamine hydrolysis in the catalytic mechanism. L-glutamine is bound by residues 379 to 382, E402, and R469; that span reads LGMQ. Catalysis depends on residues H514 and E516.

It belongs to the CTP synthase family. In terms of assembly, homotetramer.

The enzyme catalyses UTP + L-glutamine + ATP + H2O = CTP + L-glutamate + ADP + phosphate + 2 H(+). The catalysed reaction is L-glutamine + H2O = L-glutamate + NH4(+). It catalyses the reaction UTP + NH4(+) + ATP = CTP + ADP + phosphate + 2 H(+). It participates in pyrimidine metabolism; CTP biosynthesis via de novo pathway; CTP from UDP: step 2/2. Its activity is regulated as follows. Allosterically activated by GTP, when glutamine is the substrate; GTP has no effect on the reaction when ammonia is the substrate. The allosteric effector GTP functions by stabilizing the protein conformation that binds the tetrahedral intermediate(s) formed during glutamine hydrolysis. Inhibited by the product CTP, via allosteric rather than competitive inhibition. Catalyzes the ATP-dependent amination of UTP to CTP with either L-glutamine or ammonia as the source of nitrogen. Regulates intracellular CTP levels through interactions with the four ribonucleotide triphosphates. The sequence is that of CTP synthase from Acidithiobacillus ferrooxidans (strain ATCC 23270 / DSM 14882 / CIP 104768 / NCIMB 8455) (Ferrobacillus ferrooxidans (strain ATCC 23270)).